Here is a 121-residue protein sequence, read N- to C-terminus: uncharacterized protein (121 aa).

A helical membrane pass occupies residues 9–29; sequence LTILIASIYIIFFVNAAPTLY. Residues 91-121 form a disordered region; the sequence is EELPTYPPTMTTPLETTPLDTSPPVLPSAIP. The span at 98–113 shows a compositional bias: low complexity; the sequence is PTMTTPLETTPLDTSP.

Its subcellular location is the host membrane. This is an uncharacterized protein from Alcelaphine herpesvirus 1 (strain C500) (AlHV-1).